Consider the following 398-residue polypeptide: S-adenosylmethionine synthase 2 (398 aa).

Histidine 16 is a binding site for ATP. Mg(2+) is bound at residue aspartate 18. Glutamate 51 is a K(+) binding site. Residues glutamate 64 and glutamine 108 each contribute to the L-methionine site. Residues glutamine 108 to alanine 118 are flexible loop. ATP contacts are provided by residues aspartate 176 to lysine 178, lysine 242 to phenylalanine 243, aspartate 251, arginine 257 to lysine 258, alanine 274, and lysine 278. Aspartate 251 is a binding site for L-methionine. Lysine 282 is an L-methionine binding site.

Belongs to the AdoMet synthase family. As to quaternary structure, homotetramer; dimer of dimers. It depends on Mg(2+) as a cofactor. The cofactor is K(+).

It is found in the cytoplasm. It carries out the reaction L-methionine + ATP + H2O = S-adenosyl-L-methionine + phosphate + diphosphate. Its pathway is amino-acid biosynthesis; S-adenosyl-L-methionine biosynthesis; S-adenosyl-L-methionine from L-methionine: step 1/1. In terms of biological role, catalyzes the formation of S-adenosylmethionine (AdoMet) from methionine and ATP. The overall synthetic reaction is composed of two sequential steps, AdoMet formation and the subsequent tripolyphosphate hydrolysis which occurs prior to release of AdoMet from the enzyme. The protein is S-adenosylmethionine synthase 2 of Rhodopseudomonas palustris (strain BisB18).